Reading from the N-terminus, the 294-residue chain is MSINYLKFPEIDPVMFSIGPVSLHWYGMMYLIGFVFALWLANRRAAKPNSGWQKSEVETLLYVGFVGVFIGGRLGYVLFYNLPVFLDNPLYLFKVWDGGMSFHGGLIGVICAMIWFARRTKRHFFQVADFVAPLIPFGLGLGRIGNFINGELWGRVTLDTPWAILFPGSRAEDLQLVAQDPTTLLPIIQQYGVLPRHPSQLYEMFLEGVVLFIILNIFVRKNRPMGSVSGLFLIGYGAFRIIVEFFRQPDAQLGLFSGISMGQILSIPMIILGIIFMVWAYRRDKATPQTPTTH.

Transmembrane regions (helical) follow at residues 21 to 41, 60 to 80, 96 to 116, 124 to 144, 199 to 219, 226 to 246, and 259 to 279; these read VSLH…LWLA, LLYV…VLFY, WDGG…MIWF, FFQV…LGRI, SQLY…NIFV, GSVS…VEFF, and ISMG…FMVW. A 1,2-diacyl-sn-glycero-3-phospho-(1'-sn-glycerol) is bound at residue R143.

The protein belongs to the Lgt family.

It is found in the cell inner membrane. The enzyme catalyses L-cysteinyl-[prolipoprotein] + a 1,2-diacyl-sn-glycero-3-phospho-(1'-sn-glycerol) = an S-1,2-diacyl-sn-glyceryl-L-cysteinyl-[prolipoprotein] + sn-glycerol 1-phosphate + H(+). Its pathway is protein modification; lipoprotein biosynthesis (diacylglyceryl transfer). In terms of biological role, catalyzes the transfer of the diacylglyceryl group from phosphatidylglycerol to the sulfhydryl group of the N-terminal cysteine of a prolipoprotein, the first step in the formation of mature lipoproteins. The polypeptide is Phosphatidylglycerol--prolipoprotein diacylglyceryl transferase (Proteus mirabilis (strain HI4320)).